Reading from the N-terminus, the 305-residue chain is Aquaporin-1 (305 aa).

The segment at 1-34 is disordered; it reads MSSNDSNDTDKQHTRLDPTGVDDAYIPPEQPETK. The Cytoplasmic segment spans residues 1–48; the sequence is MSSNDSNDTDKQHTRLDPTGVDDAYIPPEQPETKHHRFKISKDTLRNH. The chain crosses the membrane as a helical span at residues 49–69; the sequence is FIAAAGEFCGTFMFLWCAYVI. Residues 70 to 91 lie on the Extracellular side of the membrane; it reads CNVANHDVALVAAPDGSHPGQL. A helical transmembrane segment spans residues 92–112; it reads IMIAIGFGFSVMFSIWCFAGV. The Cytoplasmic segment spans residues 113-136; the sequence is SGGALNPAMSLSLCLARAVSPTRC. The NPA 1 signature appears at 118–120; it reads NPA. The helical transmembrane segment at 137-157 threads the bilayer; the sequence is VVMWVSQIVAGMAAGGAASAM. Over 158–176 the chain is Extracellular; the sequence is TPGEVLFANSLGLGCSRTR. The helical transmembrane segment at 177-197 threads the bilayer; it reads GLFLEMFGTAILCLTVLMTAV. The Cytoplasmic portion of the chain corresponds to 198–203; sequence EKRETN. A helical transmembrane segment spans residues 204 to 224; the sequence is FMAALPIGISLFIAHVALTAY. Residues 225–248 lie on the Extracellular side of the membrane; that stretch reads TGTGVNPARSLGAAVAARYFPHYH. The NPA 2 signature appears at 230 to 232; that stretch reads NPA. The helical transmembrane segment at 249-269 threads the bilayer; that stretch reads WIYWIGTLLGSILAWSVWQLL. The Cytoplasmic segment spans residues 270–305; that stretch reads QILDYTTYVTAEKAASTKEKAQKKGETSSSSAVAEV. A compositionally biased stretch (basic and acidic residues) spans 286-295; it reads TKEKAQKKGE. Positions 286 to 305 are disordered; sequence TKEKAQKKGETSSSSAVAEV. Residues 296–305 are compositionally biased toward polar residues; the sequence is TSSSSAVAEV.

It belongs to the MIP/aquaporin (TC 1.A.8) family.

It localises to the endoplasmic reticulum membrane. The protein resides in the cell membrane. Its function is as follows. Water channel required to facilitate the transport of water across membranes. Involved in sporulation, freeze tolerance and osmotolerance. Is non-functional in most laboratory strains. The protein is Aquaporin-1 (AQY1) of Saccharomyces cerevisiae (strain YJM789) (Baker's yeast).